A 458-amino-acid polypeptide reads, in one-letter code: Argininosuccinate lyase (458 aa).

This sequence belongs to the lyase 1 family. Argininosuccinate lyase subfamily.

It localises to the cytoplasm. It catalyses the reaction 2-(N(omega)-L-arginino)succinate = fumarate + L-arginine. The protein operates within amino-acid biosynthesis; L-arginine biosynthesis; L-arginine from L-ornithine and carbamoyl phosphate: step 3/3. The chain is Argininosuccinate lyase from Neisseria meningitidis serogroup A / serotype 4A (strain DSM 15465 / Z2491).